We begin with the raw amino-acid sequence, 524 residues long: RNA-directed RNA polymerase (524 aa).

The RdRp catalytic domain occupies 220 to 340 (QSIAQIDFSS…NFETALCRQE (121 aa)).

It catalyses the reaction RNA(n) + a ribonucleoside 5'-triphosphate = RNA(n+1) + diphosphate. In terms of biological role, RNA-dependent RNA polymerase which replicates the viral genome. This chain is RNA-directed RNA polymerase, found in Cryptosporidium parvum.